The following is a 312-amino-acid chain: 26S proteasome non-ATPase regulatory subunit 14 (312 aa).

In terms of domain architecture, MPN spans 33–168 (VYISSLALLK…IDAFRTINPQ (136 aa)). The Zn(2+) site is built by His115, His117, and Asp128. The short motif at 115-128 (HSHPGFGCWLSGVD) is the JAMM motif element.

It belongs to the peptidase M67A family. PSMD14 subfamily. Component of the 19S regulatory cap of the 26S proteasome.

Metalloprotease component of the 26S proteasome that specifically cleaves 'Lys-63'-linked polyubiquitin chains. The 26S proteasome is involved in the ATP-dependent degradation of ubiquitinated proteins. The function of the 'Lys-63'-specific deubiquitination of the proteasome is unclear. The polypeptide is 26S proteasome non-ATPase regulatory subunit 14 (rpn-11) (Caenorhabditis elegans).